We begin with the raw amino-acid sequence, 301 residues long: Glycerol-3-phosphate dehydrogenase [NAD(P)+] (301 aa).

NADPH is bound by residues W13, R33, and K78. 2 residues coordinate sn-glycerol 3-phosphate: K78 and G106. A110 lines the NADPH pocket. Sn-glycerol 3-phosphate is bound by residues K161, D214, S224, R225, and N226. The active-site Proton acceptor is the K161. NADPH is bound at residue R225. E251 contacts NADPH.

Belongs to the NAD-dependent glycerol-3-phosphate dehydrogenase family.

The protein localises to the cytoplasm. It carries out the reaction sn-glycerol 3-phosphate + NAD(+) = dihydroxyacetone phosphate + NADH + H(+). The catalysed reaction is sn-glycerol 3-phosphate + NADP(+) = dihydroxyacetone phosphate + NADPH + H(+). It functions in the pathway membrane lipid metabolism; glycerophospholipid metabolism. Its function is as follows. Catalyzes the reduction of the glycolytic intermediate dihydroxyacetone phosphate (DHAP) to sn-glycerol 3-phosphate (G3P), the key precursor for phospholipid synthesis. In Synechococcus sp. (strain RCC307), this protein is Glycerol-3-phosphate dehydrogenase [NAD(P)+].